Consider the following 204-residue polypeptide: Protein phosphatase 1 regulatory subunit 1B (204 aa).

N-acetylmethionine is present on methionine 1. The disordered stretch occupies residues 1 to 204 (MDPKDRKKIQ…QRPSPSEPGT (204 aa)). A Phosphothreonine; by PKA modification is found at threonine 34. A compositionally biased stretch (basic and acidic residues) spans 41–63 (LSEHSSPEEEASPHQRASGEGHH). A phosphoserine mark is found at serine 45 and serine 46. Phosphothreonine; by CDK5 is present on threonine 75. A compositionally biased stretch (polar residues) spans 89 to 100 (HLQSISNLNENQ). Serine 102 is modified (phosphoserine). Positions 109-118 (GELRELGYPR) are enriched in basic and acidic residues. Composition is skewed to acidic residues over residues 119-138 (EEDEEEEEDDEEEEEEEDSQ) and 170-183 (DESERDGGSEDQVE). Serine 137 carries the phosphoserine modification. A Phosphoserine modification is found at serine 198.

This sequence belongs to the protein phosphatase inhibitor 1 family. In terms of processing, dopamine- and cyclic AMP-regulated neuronal phosphoprotein. Post-translationally, phosphorylation of Thr-34 is required for activity.

Its subcellular location is the cytoplasm. Inhibitor of protein-phosphatase 1. In Homo sapiens (Human), this protein is Protein phosphatase 1 regulatory subunit 1B (PPP1R1B).